The following is a 338-amino-acid chain: Acyl-CoA-binding domain-containing protein 1 (338 aa).

A helical; Signal-anchor membrane pass occupies residues 11-31 (IIFGLIFAYLLAKLISILLAF). N35 and N41 each carry an N-linked (GlcNAc...) asparagine glycan. The tract at residues 69-89 (AEQGSLRGDEDESDDDDWEGV) is disordered. Over residues 77–89 (DEDESDDDDWEGV) the composition is skewed to acidic residues. One can recognise an ACB domain in the interval 94-184 (LDEAFSAATA…VTQLYPAWVE (91 aa)). Residues 126 to 130 (YGLYK), K152, and Y171 each bind an acyl-CoA. N-linked (GlcNAc...) asparagine glycosylation occurs at N191. ANK repeat units lie at residues 217 to 246 (LKID…PVNA), 250 to 279 (EGRT…DVNA), 283 to 312 (EGQT…DTTI), and 316 to 338 (DGNS…KDSN).

Belongs to the ACBP family. In terms of assembly, interacts with RAP2-12. Binds to SMO1-1 and SMO1-2. In terms of processing, glycosylated. In seeds, localized in the outer integument. Expressed at low levels in roots, stems, leaves, flowers, and siliques, especially within seeds.

Its subcellular location is the cell membrane. It is found in the secreted. It localises to the cell wall. The protein localises to the endoplasmic reticulum membrane. Functionally, binds medium- and long-chain acyl-CoA esters with very high affinity. Can interact in vitro with arachidonyl-CoA, barely with oleoyl-CoA, but not with palmitoyl-CoA. Confers tolerance and binds to lead ions Pb(2+), probably by promoting lead translocation from roots to shoots. May function as an intracellular carrier of acyl-CoA esters. Modulates negatively sterol synthesis during embryogenesis and gametophytes development via interactions with SMO1-1 and SMO1-2; sterols serve as lipid modulators for gene expression of homeodomain-leucine zipper IV transcription factors. In Arabidopsis thaliana (Mouse-ear cress), this protein is Acyl-CoA-binding domain-containing protein 1.